We begin with the raw amino-acid sequence, 217 residues long: Large ribosomal subunit protein uL1 (217 aa).

The protein belongs to the universal ribosomal protein uL1 family.

The polypeptide is Large ribosomal subunit protein uL1 (RPL10A) (Eremothecium gossypii (strain ATCC 10895 / CBS 109.51 / FGSC 9923 / NRRL Y-1056) (Yeast)).